Here is a 386-residue protein sequence, read N- to C-terminus: Homogentisate solanesyltransferase, chloroplastic (386 aa).

The N-terminal 69 residues, 1-69 (MELSISQSPR…STNYRKISIR (69 aa)), are a transit peptide targeting the chloroplast. Helical transmembrane passes span 130 to 150 (VLKALSGLLALICGNGYIVGI), 181 to 201 (LVIFFAIAGLLVVGFNFGPFI), 204 to 220 (LYSLGLFLGTIYSVPPL), 225 to 245 (FPVAAFLIIATVRGFLLNFGV), 259 to 279 (WSAPVAFITSFVTLFALVIAI), 306 to 326 (IAFLGSGLLLVNYVSAISLAF), 335 to 355 (SLMIPAHVILASGLIFQTWVL), and 365 to 385 (ISGYYRFIWNLFYAEYLLFPF).

The protein belongs to the UbiA prenyltransferase family.

The protein localises to the plastid. The protein resides in the chloroplast membrane. It carries out the reaction all-trans-nonaprenyl diphosphate + homogentisate + H(+) = 2-methyl-6-(all-trans-nonaprenyl)benzene-1,4-diol + CO2 + diphosphate. Its activity is regulated as follows. Inhibited by haloxydine (3,5-dichloro-2,6-difluoro-4-haloxypyridine). Functionally, involved in the synthesis of plastoquinone-9. Can use both homogentisic acid and 2,5-dihydroxyphenylacetic acid gamma-lactone as prenyl acceptors, and solanesyl diphosphate &gt; farnesyl diphosphate &gt; geranylgeranyl diphosphate &gt;&gt; phytyl diphosphate as prenyl donors. Do not catalyze the decardoxylation of homogentisate uncoupled from prenylation. In Arabidopsis thaliana (Mouse-ear cress), this protein is Homogentisate solanesyltransferase, chloroplastic (HST).